Consider the following 83-residue polypeptide: Small ribosomal subunit protein uS17 (83 aa).

This sequence belongs to the universal ribosomal protein uS17 family. In terms of assembly, part of the 30S ribosomal subunit.

In terms of biological role, one of the primary rRNA binding proteins, it binds specifically to the 5'-end of 16S ribosomal RNA. The sequence is that of Small ribosomal subunit protein uS17 from Francisella tularensis subsp. tularensis (strain FSC 198).